Consider the following 1363-residue polypeptide: Vascular endothelial growth factor receptor 3 (1363 aa).

The signal sequence occupies residues 1–24 (MQRGAALCLRLWLCLGLLDGLVSG). At 25 to 775 (YSMTPPTLNI…EGSEDKGSME (751 aa)) the chain is on the extracellular side. Ig-like C2-type domains lie at 30–127 (PTLN…TAAS), 151–213 (KDAM…WGDQ), 219–326 (PFLV…TEVI), 331–415 (PFIS…ISLE), 422–552 (PQIH…FYVT), 555–671 (PDGF…KYLS), and 678–764 (PRLT…ASVA). N-linked (GlcNAc...) asparagine glycans are attached at residues Asn33, Asn104, Asn166, Asn251, Asn299, and Asn411. 2 cysteine pairs are disulfide-bonded: Cys51/Cys111 and Cys158/Cys206. The cysteines at positions 252 and 310 are disulfide-linked. 3 disulfide bridges follow: Cys445/Cys534, Cys466/Cys486, and Cys578/Cys653. Residues Asn515, Asn527, Asn594, Asn683, and Asn690 are each glycosylated (N-linked (GlcNAc...) asparagine). A disulfide bond links Cys699 and Cys751. N-linked (GlcNAc...) asparagine glycosylation occurs at Asn758. A helical transmembrane segment spans residues 776 to 796 (IVILVGTGVIAVFFWVLLLLI). Over 797–1363 (FCNMRRPAHA…RVTFFTDNSY (567 aa)) the chain is Cytoplasmic. Phosphotyrosine; by SRC occurs at positions 830, 833, and 853. The region spanning 845–1173 (LHLGRVLGYG…ELVEILGDLL (329 aa)) is the Protein kinase domain. Residues 851–859 (LGYGAFGKV) and Lys879 each bind ATP. Asp1037 serves as the catalytic Proton acceptor. Tyr1063 is modified (phosphotyrosine; by autocatalysis and SRC). Residues Tyr1068, Tyr1230, Tyr1231, and Tyr1265 each carry the phosphotyrosine; by autocatalysis modification. Residues 1291–1331 (HRQESGFSCKGPGQNVAVTRAHPDSQGRRRRPERGARGGQV) are disordered. A phosphotyrosine; by autocatalysis and SRC mark is found at Tyr1333 and Tyr1337. At Tyr1363 the chain carries Phosphotyrosine; by autocatalysis.

It belongs to the protein kinase superfamily. Tyr protein kinase family. CSF-1/PDGF receptor subfamily. Interacts with VEGFC and VEGFD. Monomer in the absence of bound VEGFC or VEGFD. Homodimer in the presence of bound VEGFC or VEGFD. Can also form a heterodimer with KDR. Interacts with PTPN14; the interaction is enhanced by stimulation with VEGFC. Interacts with CRK, GRB2, PTK2/FAK1, SHC1, PIK3R1 and PTPN11/SHP-2. Identified in a complex with SRC and ITGB1. Autophosphorylated on tyrosine residues upon ligand binding. Autophosphorylation occurs in trans, i.e. one subunit of the dimeric receptor phosphorylates tyrosine residues on the other subunit. Phosphorylation in response to H(2)O(2) is mediated by a process that requires SRC and PRKCD activity. Phosphorylation at Tyr-1068 is required for autophosphorylation at additional tyrosine residues. Phosphorylation at Tyr-1063 and Tyr-1337 is important for interaction with CRK and subsequent activation of MAPK8. Phosphorylation at Tyr-1230, Tyr-1231 and Tyr-1337 is important for interaction with GRB2 and subsequent activation of the AKT1 and MAPK1/ERK2 and/or MAPK3/ERK1 signaling pathways. In response to endothelial cell adhesion onto collagen, can also be phosphorylated in the absence of FLT4 kinase activity by SRC at Tyr-830, Tyr-833, Tyr-853, Tyr-1063, Tyr-1333, and Tyr-1337. Detected in endothelial cells (at protein level). Widely expressed. Detected in fetal spleen, lung and brain. Detected in adult liver, muscle, thymus, placenta, lung, testis, ovary, prostate, heart, and kidney.

The protein localises to the cell membrane. It is found in the cytoplasm. Its subcellular location is the nucleus. The protein resides in the secreted. It catalyses the reaction L-tyrosyl-[protein] + ATP = O-phospho-L-tyrosyl-[protein] + ADP + H(+). Present in an inactive conformation in the absence of bound ligand. Binding of VEGFC or VEGFD leads to dimerization and activation by autophosphorylation on tyrosine residues. Inhibited by MAZ51. Tyrosine-protein kinase that acts as a cell-surface receptor for VEGFC and VEGFD, and plays an essential role in adult lymphangiogenesis and in the development of the vascular network and the cardiovascular system during embryonic development. Promotes proliferation, survival and migration of endothelial cells, and regulates angiogenic sprouting. Signaling by activated FLT4 leads to enhanced production of VEGFC, and to a lesser degree VEGFA, thereby creating a positive feedback loop that enhances FLT4 signaling. Modulates KDR signaling by forming heterodimers. The secreted isoform 3 may function as a decoy receptor for VEGFC and/or VEGFD and play an important role as a negative regulator of VEGFC-mediated lymphangiogenesis and angiogenesis. Binding of vascular growth factors to isoform 1 or isoform 2 leads to the activation of several signaling cascades; isoform 2 seems to be less efficient in signal transduction, because it has a truncated C-terminus and therefore lacks several phosphorylation sites. Mediates activation of the MAPK1/ERK2, MAPK3/ERK1 signaling pathway, of MAPK8 and the JUN signaling pathway, and of the AKT1 signaling pathway. Phosphorylates SHC1. Mediates phosphorylation of PIK3R1, the regulatory subunit of phosphatidylinositol 3-kinase. Promotes phosphorylation of MAPK8 at 'Thr-183' and 'Tyr-185', and of AKT1 at 'Ser-473'. In Homo sapiens (Human), this protein is Vascular endothelial growth factor receptor 3 (FLT4).